Consider the following 155-residue polypeptide: Putative pre-16S rRNA nuclease (155 aa).

Belongs to the YqgF nuclease family.

It is found in the cytoplasm. Could be a nuclease involved in processing of the 5'-end of pre-16S rRNA. The polypeptide is Putative pre-16S rRNA nuclease (Xanthomonas axonopodis pv. citri (strain 306)).